A 68-amino-acid polypeptide reads, in one-letter code: Translational regulator CsrA 1 (68 aa).

The protein belongs to the CsrA/RsmA family. In terms of assembly, homodimer; the beta-strands of each monomer intercalate to form a hydrophobic core, while the alpha-helices form wings that extend away from the core.

The protein localises to the cytoplasm. Functionally, a key translational regulator that binds mRNA to regulate translation initiation and/or mRNA stability. Mediates global changes in gene expression, shifting from rapid growth to stress survival by linking envelope stress, the stringent response and the catabolite repression systems. Usually binds in the 5'-UTR; binding at or near the Shine-Dalgarno sequence prevents ribosome-binding, repressing translation, binding elsewhere in the 5'-UTR can activate translation and/or stabilize the mRNA. Its function is antagonized by small RNA(s). The sequence is that of Translational regulator CsrA 1 from Coxiella burnetii (strain RSA 493 / Nine Mile phase I).